The chain runs to 142 residues: Large ribosomal subunit protein uL13 (142 aa).

It belongs to the universal ribosomal protein uL13 family. As to quaternary structure, part of the 50S ribosomal subunit.

In terms of biological role, this protein is one of the early assembly proteins of the 50S ribosomal subunit, although it is not seen to bind rRNA by itself. It is important during the early stages of 50S assembly. The polypeptide is Large ribosomal subunit protein uL13 (Shewanella frigidimarina (strain NCIMB 400)).